Consider the following 525-residue polypeptide: Chromaffin granule amine transporter (525 aa).

Over M1 to Q21 the chain is Cytoplasmic. Residues L22–V42 traverse the membrane as a helical segment. The Lumenal, vesicle segment spans residues P43–R138. N-linked (GlcNAc...) asparagine glycosylation is found at N58, N87, and N104. Residues V139 to G158 traverse the membrane as a helical segment. Topologically, residues P159–H167 are cytoplasmic. The helical transmembrane segment at I168–G188 threads the bilayer. The Lumenal, vesicle segment spans residues T189 to R197. A helical transmembrane segment spans residues T198–V218. At Y219–R227 the chain is on the cytoplasmic side. Residues A228–M250 form a helical membrane-spanning segment. At Y251 to K256 the chain is on the lumenal, vesicle side. The chain crosses the membrane as a helical span at residues S257 to Q279. Topologically, residues P280–D299 are cytoplasmic. The helical transmembrane segment at P300–L319 threads the bilayer. At E320 to K335 the chain is on the lumenal, vesicle side. Residues W336–A360 traverse the membrane as a helical segment. Residues N361–R365 are Cytoplasmic-facing. Residues W366–A386 form a helical membrane-spanning segment. Over H387 to A397 the chain is Lumenal, vesicle. A helical transmembrane segment spans residues G398–V418. Residues D419–H422 lie on the Cytoplasmic side of the membrane. A helical membrane pass occupies residues T423–I443. At G444–G448 the chain is on the lumenal, vesicle side. A helical membrane pass occupies residues G449–V470. Over Y471–E525 the chain is Cytoplasmic. Residues A503–E525 form a disordered region. The span at L513–E525 shows a compositional bias: acidic residues.

It belongs to the major facilitator superfamily. Vesicular transporter family. In terms of tissue distribution, expressed primarily in neuroendocrine tissues. Highly expressed in chromaffin cells of the adrenal medulla (at protein level). Detected in peripheral sympathetic ganglia (at protein level). Found in some paracrine cells in stomach and duodenum (at protein level). Expressed in substantia nigra. As to expression, expressed in gastrointestinal tract.

It is found in the cytoplasmic vesicle. It localises to the secretory vesicle membrane. The protein localises to the secretory vesicle. Its subcellular location is the synaptic vesicle membrane. The protein resides in the endoplasmic reticulum membrane. The enzyme catalyses serotonin(in) + 2 H(+)(out) = serotonin(out) + 2 H(+)(in). The catalysed reaction is (R)-noradrenaline(in) + 2 H(+)(out) = (R)-noradrenaline(out) + 2 H(+)(in). It catalyses the reaction dopamine(in) + 2 H(+)(out) = dopamine(out) + 2 H(+)(in). Strongly inhibited by reserpine. Also inhibited to a lesser extent by ketanserin and fenfluramine. Not significantly inhibited by tetrabenazine. In terms of biological role, electrogenic antiporter that exchanges one cationic monoamine with two intravesicular protons across the membrane of secretory and synaptic vesicles. Uses the electrochemical proton gradient established by the V-type proton-pump ATPase to accumulate high concentrations of monoamines inside the vesicles prior to their release via exocytosis. Transports catecholamines and indolamines with higher affinity for serotonin. Regulates the transvesicular monoaminergic gradient that determines the quantal size. Mediates presynaptic monoaminergic vesicle transport in the amygdala and prefrontal brain regions related with emotion processing in response to environmental stimuli. Its function is as follows. Unable to uptake serotonin. The sequence is that of Chromaffin granule amine transporter (SLC18A1) from Homo sapiens (Human).